The following is a 202-amino-acid chain: Protein-methionine-sulfoxide reductase heme-binding subunit MsrQ (202 aa).

5 helical membrane passes run 8–28 (IVWL…WLFW), 82–102 (LWCF…ELGI), 116–136 (PYLT…VTST), 149–169 (LLHN…LWSV), and 171–191 (IVSP…TWRY).

Belongs to the MsrQ family. In terms of assembly, heterodimer of a catalytic subunit (MsrP) and a heme-binding subunit (MsrQ). FMN serves as cofactor. It depends on heme b as a cofactor.

It localises to the cell inner membrane. Part of the MsrPQ system that repairs oxidized periplasmic proteins containing methionine sulfoxide residues (Met-O), using respiratory chain electrons. Thus protects these proteins from oxidative-stress damage caused by reactive species of oxygen and chlorine generated by the host defense mechanisms. MsrPQ is essential for the maintenance of envelope integrity under bleach stress, rescuing a wide series of structurally unrelated periplasmic proteins from methionine oxidation. MsrQ provides electrons for reduction to the reductase catalytic subunit MsrP, using the quinone pool of the respiratory chain. The sequence is that of Protein-methionine-sulfoxide reductase heme-binding subunit MsrQ from Klebsiella pneumoniae subsp. pneumoniae (strain ATCC 700721 / MGH 78578).